Consider the following 130-residue polypeptide: Small ribosomal subunit protein uS11 (130 aa).

Belongs to the universal ribosomal protein uS11 family. As to quaternary structure, part of the 30S ribosomal subunit. Interacts with proteins S7 and S18. Binds to IF-3.

In terms of biological role, located on the platform of the 30S subunit, it bridges several disparate RNA helices of the 16S rRNA. Forms part of the Shine-Dalgarno cleft in the 70S ribosome. The sequence is that of Small ribosomal subunit protein uS11 from Thermotoga petrophila (strain ATCC BAA-488 / DSM 13995 / JCM 10881 / RKU-1).